The primary structure comprises 594 residues: Elongation factor 4 (594 aa).

The tr-type G domain occupies 2–184; sequence KNIRNFSIIA…TIVAKVPAPE (183 aa). GTP-binding positions include 14–19 and 131–134; these read DHGKST and NKID.

It belongs to the TRAFAC class translation factor GTPase superfamily. Classic translation factor GTPase family. LepA subfamily.

It localises to the cell inner membrane. The catalysed reaction is GTP + H2O = GDP + phosphate + H(+). Required for accurate and efficient protein synthesis under certain stress conditions. May act as a fidelity factor of the translation reaction, by catalyzing a one-codon backward translocation of tRNAs on improperly translocated ribosomes. Back-translocation proceeds from a post-translocation (POST) complex to a pre-translocation (PRE) complex, thus giving elongation factor G a second chance to translocate the tRNAs correctly. Binds to ribosomes in a GTP-dependent manner. This Francisella tularensis subsp. holarctica (strain FTNF002-00 / FTA) protein is Elongation factor 4.